The primary structure comprises 440 residues: Histidinol dehydrogenase (440 aa).

Residues Tyr134, Gln196, and Asn219 each contribute to the NAD(+) site. Substrate-binding residues include Ser242, Gln264, and His267. The Zn(2+) site is built by Gln264 and His267. Catalysis depends on proton acceptor residues Glu332 and His333. Residues His333, Asp366, Glu420, and His425 each coordinate substrate. A Zn(2+)-binding site is contributed by Asp366. His425 contacts Zn(2+).

The protein belongs to the histidinol dehydrogenase family. Requires Zn(2+) as cofactor.

It catalyses the reaction L-histidinol + 2 NAD(+) + H2O = L-histidine + 2 NADH + 3 H(+). It functions in the pathway amino-acid biosynthesis; L-histidine biosynthesis; L-histidine from 5-phospho-alpha-D-ribose 1-diphosphate: step 9/9. In terms of biological role, catalyzes the sequential NAD-dependent oxidations of L-histidinol to L-histidinaldehyde and then to L-histidine. In Prochlorococcus marinus (strain SARG / CCMP1375 / SS120), this protein is Histidinol dehydrogenase.